The following is a 55-amino-acid chain: U2-theraphotoxin-Cg1a (55 aa).

The propeptide occupies 1–19 (DSPAWLKSMERIFQSEERE). 3 cysteine pairs are disulfide-bonded: cysteine 20-cysteine 34, cysteine 27-cysteine 39, and cysteine 33-cysteine 47.

This sequence belongs to the neurotoxin 10 (Hwtx-1) family. 06 (F4b) subfamily. As to expression, expressed by the venom gland.

It localises to the secreted. Its function is as follows. Probable ion channel inhibitor. This chain is U2-theraphotoxin-Cg1a, found in Chilobrachys guangxiensis (Chinese earth tiger tarantula).